The following is a 203-amino-acid chain: Thymidine kinase (203 aa).

ATP contacts are provided by residues glycine 21 to threonine 28 and aspartate 99 to glutamine 102. Glutamate 100 acts as the Proton acceptor in catalysis. Zn(2+)-binding residues include cysteine 156, cysteine 159, cysteine 194, and cysteine 197.

Belongs to the thymidine kinase family. Homotetramer.

The protein localises to the cytoplasm. It carries out the reaction thymidine + ATP = dTMP + ADP + H(+). This is Thymidine kinase from Mesoplasma florum (strain ATCC 33453 / NBRC 100688 / NCTC 11704 / L1) (Acholeplasma florum).